The primary structure comprises 438 residues: Putative F-box protein At5g15660 (438 aa).

Residues 1–24 (MRRRSKKIKTENNSNPETSEERNK) form a disordered region. The region spanning 22–68 (RNKFDEIPHDLVIEILERLPLKSVARFLTVSKLWATTIRSPDFRKSY) is the F-box domain.

In Arabidopsis thaliana (Mouse-ear cress), this protein is Putative F-box protein At5g15660.